Here is a 1194-residue protein sequence, read N- to C-terminus: DNA polymerase catalytic subunit (1194 aa).

The protein belongs to the DNA polymerase type-B family. In terms of assembly, forms a complex with the ssDNA-binding protein, the DNA polymerase processivity factor, and the alkaline exonuclease. Interacts with the helicase-primase complex composed of the primase, the helicase and the primase-associated factor; this interaction may coordinate leading and lagging strand DNA synthesis at the replication fork.

Its subcellular location is the host nucleus. The catalysed reaction is DNA(n) + a 2'-deoxyribonucleoside 5'-triphosphate = DNA(n+1) + diphosphate. It carries out the reaction Endonucleolytic cleavage to 5'-phosphomonoester.. Functionally, replicates viral genomic DNA. The replication complex is composed of six viral proteins: the DNA polymerase, processivity factor, primase, primase-associated factor, helicase, and ssDNA-binding protein. Additionally, the polymerase contains an intrinsic ribonuclease H (RNase H) activity that specifically degrades RNA/DNA heteroduplexes or duplex DNA substrates in the 5' to 3' direction. Therefore, it can catalyze the excision of the RNA primers that initiate the synthesis of Okazaki fragments at a replication fork during viral DNA replication. In Varicella-zoster virus (strain Dumas) (HHV-3), this protein is DNA polymerase catalytic subunit.